Consider the following 156-residue polypeptide: MKKVRLTREGYEKLKKELEDLKRKFMYEISERIKEARELGDLSENSEYEAAKNEQGRVGSRIMEIEQILSNAEIIEDSEESDEVTLGKWVVIKNLDTGEEHKFRIVTPQEADFFAQKLSSDSPLGKSLLGRKVGDVVKVKAPSGVQRYQVMAVMNK.

The stretch at 1–32 (MKKVRLTREGYEKLKKELEDLKRKFMYEISER) forms a coiled coil.

The protein belongs to the GreA/GreB family.

Functionally, necessary for efficient RNA polymerase transcription elongation past template-encoded arresting sites. The arresting sites in DNA have the property of trapping a certain fraction of elongating RNA polymerases that pass through, resulting in locked ternary complexes. Cleavage of the nascent transcript by cleavage factors such as GreA or GreB allows the resumption of elongation from the new 3'terminus. GreA releases sequences of 2 to 3 nucleotides. This chain is Transcription elongation factor GreA, found in Thermotoga petrophila (strain ATCC BAA-488 / DSM 13995 / JCM 10881 / RKU-1).